We begin with the raw amino-acid sequence, 415 residues long: Adenosylhomocysteinase (415 aa).

Substrate contacts are provided by threonine 53, aspartate 124, and glutamate 147. 148–150 lines the NAD(+) pocket; that stretch reads TTT. The substrate site is built by lysine 177 and aspartate 181. NAD(+) is bound by residues asparagine 182, 211–216, glutamate 234, asparagine 269, 290–292, and asparagine 337; these read GYGWVG and SGH.

The protein belongs to the adenosylhomocysteinase family. Requires NAD(+) as cofactor.

It is found in the cytoplasm. The enzyme catalyses S-adenosyl-L-homocysteine + H2O = L-homocysteine + adenosine. It participates in amino-acid biosynthesis; L-homocysteine biosynthesis; L-homocysteine from S-adenosyl-L-homocysteine: step 1/1. Its function is as follows. May play a key role in the regulation of the intracellular concentration of adenosylhomocysteine. This chain is Adenosylhomocysteinase, found in Sulfurisphaera tokodaii (strain DSM 16993 / JCM 10545 / NBRC 100140 / 7) (Sulfolobus tokodaii).